Here is an 80-residue protein sequence, read N- to C-terminus: Histone H3.3 (80 aa).

Belongs to the histone H3 family. In terms of assembly, the nucleosome is a histone octamer containing two molecules each of H2A, H2B, H3 and H4 assembled in one H3-H4 heterotetramer and two H2A-H2B heterodimers. The octamer wraps approximately 147 bp of DNA.

The protein localises to the nucleus. It is found in the chromosome. Variant histone H3 which replaces conventional H3 in a wide range of nucleosomes in active genes. Constitutes the predominant form of histone H3 in non-dividing cells and is incorporated into chromatin independently of DNA synthesis. Deposited at sites of nucleosomal displacement throughout transcribed genes, suggesting that it represents an epigenetic imprint of transcriptionally active chromatin. Nucleosomes wrap and compact DNA into chromatin, limiting DNA accessibility to the cellular machineries which require DNA as a template. Histones thereby play a central role in transcription regulation, DNA repair, DNA replication and chromosomal stability. DNA accessibility is regulated via a complex set of post-translational modifications of histones, also called histone code, and nucleosome remodeling. The protein is Histone H3.3 of Hordeum vulgare (Barley).